Consider the following 338-residue polypeptide: UDP-glucose 4-epimerase (338 aa).

Residues 16-17, 37-42, 59-60, 81-85, threonine 126, tyrosine 153, lysine 157, and phenylalanine 181 each bind NAD(+); these read YI, IDINHT, NL, and FAAKT. Substrate is bound by residues threonine 126 and tyrosine 153. The active-site Proton acceptor is the tyrosine 153. Substrate is bound by residues asparagine 182, 198-199, 215-217, arginine 230, and 294-297; these read TL, FLY, and RAGD.

It belongs to the NAD(P)-dependent epimerase/dehydratase family. As to quaternary structure, homodimer. Requires NAD(+) as cofactor.

It carries out the reaction UDP-alpha-D-glucose = UDP-alpha-D-galactose. It participates in carbohydrate metabolism; galactose metabolism. In terms of biological role, involved in the metabolism of galactose. Catalyzes the conversion of UDP-galactose (UDP-Gal) to UDP-glucose (UDP-Glc) through a mechanism involving the transient reduction of NAD. The chain is UDP-glucose 4-epimerase (galE) from Mycoplasma pneumoniae (strain ATCC 29342 / M129 / Subtype 1) (Mycoplasmoides pneumoniae).